Reading from the N-terminus, the 230-residue chain is MSSANTTVVTTTVRNATPSLALDAGTIERFLAHSHRRRYPTRTDVFRPGDPAGTLYYVISGSVSIIAEEDDDRELVLGYFGSGEFVGEMGLFIESDTREVILRTRTQCELAEISYERLQQLFQTSLSPDAPKILYAIGVQLSKRLLDTTRKASRLAFLDVTDRIVRTLHDLSKEPEAMSHPQGTQLRVSRQELARLVGCSREMAGRVLKKLQADGLLHARGKTVVLYGTR.

18 to 139 is a binding site for a nucleoside 3',5'-cyclic phosphate; sequence PSLALDAGTI…APKILYAIGV (122 aa). One can recognise an HTH crp-type domain in the interval 158 to 230; the sequence is LDVTDRIVRT…GKTVVLYGTR (73 aa). A DNA-binding region (H-T-H motif) is located at residues 190–209; that stretch reads RQELARLVGCSREMAGRVLK.

In terms of assembly, homodimer.

The protein localises to the cytoplasm. With respect to regulation, allosterically inhibited by cyclic di-GMP (c-di-GMP), which binds to Clp and abolishes its ability to bind its target gene promoter. In terms of biological role, global transcriptional regulator that regulates virulence factors production by activating or repressing the expression of a large set of genes in diffusible signal factor (DSF) pathway. This Xanthomonas oryzae pv. oryzae (strain MAFF 311018) protein is CRP-like protein Clp (clp).